A 285-amino-acid polypeptide reads, in one-letter code: Bifunctional protein FolD (285 aa).

NADP(+) contacts are provided by residues 166–168 (GRS), Ser191, and Ile232.

Belongs to the tetrahydrofolate dehydrogenase/cyclohydrolase family. Homodimer.

It catalyses the reaction (6R)-5,10-methylene-5,6,7,8-tetrahydrofolate + NADP(+) = (6R)-5,10-methenyltetrahydrofolate + NADPH. It carries out the reaction (6R)-5,10-methenyltetrahydrofolate + H2O = (6R)-10-formyltetrahydrofolate + H(+). The protein operates within one-carbon metabolism; tetrahydrofolate interconversion. Functionally, catalyzes the oxidation of 5,10-methylenetetrahydrofolate to 5,10-methenyltetrahydrofolate and then the hydrolysis of 5,10-methenyltetrahydrofolate to 10-formyltetrahydrofolate. The polypeptide is Bifunctional protein FolD (Rickettsia typhi (strain ATCC VR-144 / Wilmington)).